Reading from the N-terminus, the 97-residue chain is Aspartyl/glutamyl-tRNA(Asn/Gln) amidotransferase subunit C (97 aa).

It belongs to the GatC family. Heterotrimer of A, B and C subunits.

It catalyses the reaction L-glutamyl-tRNA(Gln) + L-glutamine + ATP + H2O = L-glutaminyl-tRNA(Gln) + L-glutamate + ADP + phosphate + H(+). The catalysed reaction is L-aspartyl-tRNA(Asn) + L-glutamine + ATP + H2O = L-asparaginyl-tRNA(Asn) + L-glutamate + ADP + phosphate + 2 H(+). Allows the formation of correctly charged Asn-tRNA(Asn) or Gln-tRNA(Gln) through the transamidation of misacylated Asp-tRNA(Asn) or Glu-tRNA(Gln) in organisms which lack either or both of asparaginyl-tRNA or glutaminyl-tRNA synthetases. The reaction takes place in the presence of glutamine and ATP through an activated phospho-Asp-tRNA(Asn) or phospho-Glu-tRNA(Gln). This chain is Aspartyl/glutamyl-tRNA(Asn/Gln) amidotransferase subunit C, found in Prochlorococcus marinus (strain MIT 9215).